The primary structure comprises 593 residues: Arginine--tRNA ligase (593 aa).

Positions 123–133 (PNVAKPMHVGH) match the 'HIGH' region motif.

This sequence belongs to the class-I aminoacyl-tRNA synthetase family. In terms of assembly, monomer.

The protein resides in the cytoplasm. The enzyme catalyses tRNA(Arg) + L-arginine + ATP = L-arginyl-tRNA(Arg) + AMP + diphosphate. The protein is Arginine--tRNA ligase of Phenylobacterium zucineum (strain HLK1).